The sequence spans 149 residues: Transcriptional regulator MraZ (149 aa).

SpoVT-AbrB domains lie at 7–54 (KYVN…GISH) and 83–126 (AVQL…QPQN).

This sequence belongs to the MraZ family. As to quaternary structure, forms oligomers.

The protein resides in the cytoplasm. It is found in the nucleoid. The sequence is that of Transcriptional regulator MraZ from Rickettsia conorii (strain ATCC VR-613 / Malish 7).